Reading from the N-terminus, the 77-residue chain is U10-lycotoxin-Ls1d (77 aa).

A signal peptide spans 1–20 (MKLIIFTGLFLFAIVSLIEA). Residues 21 to 26 (EEESGR) constitute a propeptide that is removed on maturation.

Belongs to the neurotoxin 19 (CSTX) family. 09 (U10-Lctx) subfamily. In terms of processing, contains 4 disulfide bonds. As to expression, expressed by the venom gland.

It is found in the secreted. In Lycosa singoriensis (Wolf spider), this protein is U10-lycotoxin-Ls1d.